Here is an 831-residue protein sequence, read N- to C-terminus: Phenylalanine--tRNA ligase beta subunit (831 aa).

The tRNA-binding domain maps to 44 to 155 (GPVDGPVTVG…GAAEPGADGA (112 aa)). The B5 domain maps to 414–489 (WSPPPIRMGV…RLEGLEVIPS (76 aa)). The Mg(2+) site is built by Asp467, Asp473, Glu476, and Glu477. The FDX-ACB domain occupies 737–830 (SPYPAVFQDV…AAERVGAVLR (94 aa)).

It belongs to the phenylalanyl-tRNA synthetase beta subunit family. Type 1 subfamily. As to quaternary structure, tetramer of two alpha and two beta subunits. It depends on Mg(2+) as a cofactor.

The protein resides in the cytoplasm. It carries out the reaction tRNA(Phe) + L-phenylalanine + ATP = L-phenylalanyl-tRNA(Phe) + AMP + diphosphate + H(+). The sequence is that of Phenylalanine--tRNA ligase beta subunit (pheT) from Mycobacterium tuberculosis (strain ATCC 25618 / H37Rv).